The primary structure comprises 542 residues: Sensor protein CitS (542 aa).

Residues 1 to 13 (MVKKRFHFSLQTK) are Cytoplasmic-facing. Residues 14-34 (IMGLIAALLVFVIGVLTITLA) traverse the membrane as a helical segment. At 35–175 (VQHTQGERRQ…TEQSIKKHLR (141 aa)) the chain is on the extracellular side. The chain crosses the membrane as a helical span at residues 176–196 (NLSVIAVLVLLLGFIGAAVLA). Topologically, residues 197 to 542 (KSIRKDTLGL…PFDSHRDCGG (346 aa)) are cytoplasmic. One can recognise a PAS domain in the interval 216-279 (RERNAMLFAI…MSVLEKGEML (64 aa)). Residues 336 to 528 (AQTHEFSNKL…VFTVFIPKEK (193 aa)) form the Histidine kinase domain. His-339 bears the Phosphohistidine; by autocatalysis mark.

The protein localises to the cell membrane. The catalysed reaction is ATP + protein L-histidine = ADP + protein N-phospho-L-histidine.. Member of the two-component regulatory system CitT/CitS. Regulates the expression of the citM-yflN operon. Functions probably as a membrane-associated protein kinase that phosphorylates CitT in response to environmental citrate or Mg(2+)-citrate complex. In Bacillus subtilis (strain 168), this protein is Sensor protein CitS (citS).